Reading from the N-terminus, the 502-residue chain is Protein DETOXIFICATION 7 (502 aa).

The next 12 helical transmembrane spans lie at 36–56 (MAAP…ISMV), 68–88 (AVAI…VGFA), 112–132 (YSSM…WFFM), 143–163 (PLIS…LFGF), 182–202 (LFVS…LLVY), 208–228 (IVGA…LLWI), 262–282 (AMMI…SGLL), 291–311 (VISI…AIGA), 331–351 (AAVN…TITL), 375–395 (ITPI…LSGV), 408–428 (ASLG…CFVM), and 436–456 (WIGI…VTFF).

This sequence belongs to the multi antimicrobial extrusion (MATE) (TC 2.A.66.1) family.

The protein resides in the membrane. The polypeptide is Protein DETOXIFICATION 7 (Arabidopsis thaliana (Mouse-ear cress)).